Consider the following 245-residue polypeptide: Phycocyanobilin:ferredoxin oxidoreductase (245 aa).

The protein belongs to the HY2 family.

The catalysed reaction is (2R,3Z)-phycocyanobilin + 4 oxidized [2Fe-2S]-[ferredoxin] = biliverdin IXalpha + 4 reduced [2Fe-2S]-[ferredoxin] + 4 H(+). Catalyzes the four-electron reduction of biliverdin IX-alpha (2-electron reduction at both the A and D rings); the reaction proceeds via an isolatable 2-electron intermediate, 181,182-dihydrobiliverdin. The polypeptide is Phycocyanobilin:ferredoxin oxidoreductase (Gloeothece citriformis (strain PCC 7424) (Cyanothece sp. (strain PCC 7424))).